The chain runs to 364 residues: N-alpha-acetyltransferase 30 (364 aa).

Positions 1 to 18 are enriched in pro residues; sequence MAEVPPGPSSLLPPPAPA. Disordered stretches follow at residues 1–21, 39–65, and 110–164; these read MAEV…AAPA, SEDE…TSAK, and EAAA…SDPA. Residues Ser-39 and Ser-54 each carry the phosphoserine modification. Positions 39–48 are enriched in acidic residues; the sequence is SEDEEDDEEH. Over residues 126–135 the composition is skewed to basic and acidic residues; sequence AEGHPGERPP. Low complexity predominate over residues 152-164; it reads AAAAAAGAASDPA. Phosphoserine is present on residues Ser-192, Ser-198, and Ser-201. The region spanning 216-364 is the N-acetyltransferase domain; sequence RYVRYESELQ…DALRLKLWLR (149 aa). N6-acetyllysine is present on Lys-235.

The protein belongs to the acetyltransferase family. MAK3 subfamily. As to quaternary structure, component of the N-terminal acetyltransferase C (NatC) complex, which is composed of NAA35, NAA38 and NAA30.

The protein resides in the cytoplasm. It is found in the nucleus. The catalysed reaction is N-terminal L-methionyl-L-leucyl-[protein] + acetyl-CoA = N-terminal N(alpha)-acetyl-L-methionyl-L-leucyl-[protein] + CoA + H(+). The enzyme catalyses N-terminal L-methionyl-L-isoleucyl-[protein] + acetyl-CoA = N-terminal N(alpha)-acetyl-L-methionyl-L-isoleucyl-[protein] + CoA + H(+). It carries out the reaction N-terminal L-methionyl-L-phenylalanyl-[protein] + acetyl-CoA = N-terminal N(alpha)-acetyl-L-methionyl-L-phenylalanyl-[protein] + CoA + H(+). It catalyses the reaction N-terminal L-methionyl-L-tryptophyl-[protein] + acetyl-CoA = N-terminal N(alpha)-acetyl-L-methionyl-L-tryptophyl-[protein] + CoA + H(+). The catalysed reaction is N-terminal L-methionyl-L-tyrosyl-[protein] + acetyl-CoA = N-terminal N(alpha)-acetyl-L-methionyl-L-tyrosyl-[protein] + CoA + H(+). Its function is as follows. Catalytic subunit of the N-terminal acetyltransferase C (NatC) complex. Catalyzes acetylation of the N-terminal methionine residues of peptides beginning with Met-Leu-Ala and Met-Leu-Gly. N-terminal acetylation protects proteins from ubiquitination and degradation by the N-end rule pathway. Necessary for the lysosomal localization and function of ARL8B sugeesting that ARL8B is a NatC substrate. The sequence is that of N-alpha-acetyltransferase 30 (Naa30) from Mus musculus (Mouse).